Here is a 445-residue protein sequence, read N- to C-terminus: FAS-associated factor 2 (445 aa).

Residue A2 is modified to N-acetylalanine. One can recognise a UBA domain in the interval 12–48 (EQTEKLLQFQDLTGIESMDQCRHTLEQHNWNIEAAVQ). K167 carries the N6-acetyllysine modification. Residues 275 to 350 (SERLEREERN…EEKERKLECL (76 aa)) adopt a coiled-coil conformation. The interval 299 to 361 (ASLRADQEKE…PEPSPDDPES (63 aa)) is disordered. The segment covering 303–348 (ADQEKERKKREERERKRRKEEEVQQQKLAEERRRRNLQEEKERKLE) has biased composition (basic and acidic residues). The region spanning 357-439 (DDPESVKIIF…GLSHTEVLFV (83 aa)) is the UBX domain.

As to quaternary structure, identified in a complex that contains SEL1L, OS9, FAF2/UBXD8, UBE2J1/UBC6E and AUP1. Interacts with YOD1. Interacts (via N-terminus) with UBQLN2 (via C-terminus). Interacts with PNPLA2 and UBAC2. Interacts with ZFAND2B; probably through VCP. Interacts with LMBR1L.

It is found in the cytoplasm. The protein resides in the lipid droplet. It localises to the endoplasmic reticulum. Plays an important role in endoplasmic reticulum-associated degradation (ERAD) that mediates ubiquitin-dependent degradation of misfolded endoplasmic reticulum proteins. By controlling the steady-state expression of the IGF1R receptor, indirectly regulates the insulin-like growth factor receptor signaling pathway. Involved in inhibition of lipid droplet degradation by binding to phospholipase PNPL2 and inhibiting its activity by promoting dissociation of PNPL2 from its endogenous activator, ABHD5 which inhibits the rate of triacylglycerol hydrolysis. Involved in stress granule disassembly: associates with ubiquitinated G3BP1 in response to heat shock, thereby promoting interaction between ubiquitinated G3BP1 and VCP, followed by G3BP1 extraction from stress granules and stress granule disassembly. This is FAS-associated factor 2 (FAF2) from Bos taurus (Bovine).